The following is an 87-amino-acid chain: Small ribosomal subunit protein bS16 (87 aa).

It belongs to the bacterial ribosomal protein bS16 family.

In Psychrobacter sp. (strain PRwf-1), this protein is Small ribosomal subunit protein bS16.